Here is a 319-residue protein sequence, read N- to C-terminus: L-lactate dehydrogenase 2 (319 aa).

NAD(+)-binding positions include Val-17, Asp-38, Lys-43, Tyr-69, and 83–84; that span reads GA. Gln-86 and Arg-92 together coordinate substrate. Residues Ser-105, 122-124, and Ser-147 contribute to the NAD(+) site; that span reads ATN. Position 124–127 (124–127) interacts with substrate; the sequence is NPVD. 152–155 is a substrate binding site; it reads DSGR. Positions 157 and 172 each coordinate beta-D-fructose 1,6-bisphosphate. Catalysis depends on His-179, which acts as the Proton acceptor. Position 224 is a phosphotyrosine (Tyr-224). Thr-233 lines the substrate pocket.

It belongs to the LDH/MDH superfamily. LDH family. Homotetramer.

Its subcellular location is the cytoplasm. It catalyses the reaction (S)-lactate + NAD(+) = pyruvate + NADH + H(+). Its pathway is fermentation; pyruvate fermentation to lactate; (S)-lactate from pyruvate: step 1/1. With respect to regulation, allosterically activated by fructose 1,6-bisphosphate (FBP). In terms of biological role, catalyzes the conversion of lactate to pyruvate. In Peribacillus psychrosaccharolyticus (Bacillus psychrosaccharolyticus), this protein is L-lactate dehydrogenase 2.